The following is a 2434-amino-acid chain: ATP-binding cassette sub-family A member 2 (2434 aa).

N-linked (GlcNAc...) asparagine glycosylation is present at Asn14. Helical transmembrane passes span 22–42 and 54–74; these read PWVL…LLGL and AFYT…QSLC. Residues Asn89, Asn168, and Asn173 are each glycosylated (N-linked (GlcNAc...) asparagine). Gln271 bears the N5-methylglutamine mark. Asn305, Asn368, Asn379, Asn420, Asn432, Asn476, Asn484, Asn494, Asn530, Asn549, Asn590, Asn600, and Asn628 each carry an N-linked (GlcNAc...) asparagine glycan. A compositionally biased stretch (low complexity) spans 354-369; the sequence is RAPAPQAGSPSGPANS. Positions 354 to 396 are disordered; the sequence is RAPAPQAGSPSGPANSTGVGANTGPNTTVEEGTQSPVTPASPD. A compositionally biased stretch (polar residues) spans 370–396; that stretch reads TGVGANTGPNTTVEEGTQSPVTPASPD. The next 6 helical transmembrane spans lie at 699–719, 750–770, 782–802, 813–833, 857–877, and 893–913; these read FLFV…VYSV, VAWF…LTAI, VLII…FCFL, ASAC…YVAI, AFGL…GIQW, and LLAV…TWYI. The 232-residue stretch at 990 to 1221 folds into the ABC transporter 1 domain; it reads VCVDKLTKVY…YGDGYRLTLV (232 aa). 1024-1031 lines the ATP pocket; that stretch reads GHNGAGKT. The tract at residues 1225-1246 is disordered; it reads AEPGTSQEPGMASSPSGRPQLS. Polar residues predominate over residues 1228–1246; sequence GTSQEPGMASSPSGRPQLS. A Phosphoserine modification is found at Ser1238. Asn1247 carries an N-linked (GlcNAc...) asparagine glycan. Residues Ser1327 and Ser1331 each carry the phosphoserine modification. A helical membrane pass occupies residues 1461–1481; it reads ILLPAFFVCVAMTVALSVPEI. Residues Asn1496, Asn1549, and Asn1557 are each glycosylated (N-linked (GlcNAc...) asparagine). The segment at 1587 to 1606 is disordered; sequence NFVPPPPSPAPSDSPLSPDE. The span at 1589–1598 shows a compositional bias: pro residues; the sequence is VPPPPSPAPS. 3 N-linked (GlcNAc...) asparagine glycosylation sites follow: Asn1613, Asn1678, and Asn1776. Transmembrane regions (helical) follow at residues 1793 to 1813, 1842 to 1862, 1873 to 1893, 1906 to 1926, and 1992 to 2012; these read VVIA…FVVF, VWDM…LFVF, FPAV…IMYP, VFLI…TFLL, and GLVA…MCQY. Residues 2051–2286 enclose the ABC transporter 2 domain; the sequence is VKIENLTKVY…FGDGYMITVR (236 aa). A glycan (N-linked (GlcNAc...) asparagine) is linked at Asn2055. 2088 to 2095 serves as a coordination point for ATP; the sequence is GVNGAGKT. Thr2411 is subject to Phosphothreonine.

It belongs to the ABC transporter superfamily. ABCA family. In terms of processing, N-glycosylated. Methylated at Gln-271 by N6AMT1. As to expression, expressed at high levels in brain, at moderate levels in heart, kidney and lung, and at low levels in skeletal muscle, stomach, spleen, colon and pancreas. Not detected in the liver or small intestine. In brain, highly expressed in white matter and detected in oligodendrocytes. Expressed in cerebellum as well as the anterior commissure. Expressed mainly in the white matter but is also scattered in gray matter throughout the whole brain. Expressed in myelinating cells of both ventral and dorsal restricted regions in newborn spinal cord. Expressed in non-myelin-forming as well as in myelin-forming Schwann cells in the sciatic nerve.

The protein resides in the endosome membrane. It localises to the lysosome membrane. Probable transporter, its natural substrate has not been found yet. May have a role in macrophage lipid metabolism and neural development. May play a role in myelination, perhaps as a transporter for certain kinds of myelin chemical components. May play an important role in gamma-secretase processing of APP and thus in amyloid-beta peptide generation. Regulates esterification of plasma membrane cholesterol by modulation of sphingolipid metabolism. In terms of biological role, probable lipid transporter that modulates cholesterol sequestration in the late endosome/lysosome by regulating the intracellular sphingolipid metabolism, in turn participates in cholesterol homeostasis. May alter the transbilayer distribution of ceramide in the intraluminal membrane lipid bilayer, favoring its retention in the outer leaflet that results in increased acid ceramidase activity in the late endosome/lysosome, facilitating ceramide deacylation to sphingosine leading to the sequestration of free cholesterol in lysosomes. In addition regulates amyloid-beta production either by activating a signaling pathway that regulates amyloid precursor protein transcription through the modulation of sphingolipid metabolism or through its role in gamma-secretase processing of APP. May play a role in myelin formation. This chain is ATP-binding cassette sub-family A member 2, found in Rattus norvegicus (Rat).